The primary structure comprises 188 residues: UPF0301 protein XC_1365 (188 aa).

Belongs to the UPF0301 (AlgH) family.

The sequence is that of UPF0301 protein XC_1365 from Xanthomonas campestris pv. campestris (strain 8004).